Consider the following 324-residue polypeptide: MSVWAIGDLQGCYDITQQLLEKIRFDPAQDTLWFCGDLVNRGGQSLETLRLVHSLRAHSVVVLGNHDLSLLAIGARSEEEQRKVNPDLQRIVLAEDRDVLLDWLRMQKLAHVDRELGWMMIHAGLAPKWTTQMAEKHAREVEQQLQGGGYRKLLRNMYGDQPGWSPGLSGYDRSRAIINLFTRMRYCTPRGRIATDDKGTPGTQAQGLYPWFEVPGRVERDLKIVCGHWSALGLTITQGVHAIDTGAVWGGKLTALQLDTDELRVVQVPGREVTAPATAPRAPRRPRERQGRQRARGGRGGGNGNGNGGNAAAPAAAPGDAPQE.

The disordered stretch occupies residues 269–324; sequence PGREVTAPATAPRAPRRPRERQGRQRARGGRGGGNGNGNGGNAAAPAAAPGDAPQE. The segment covering 282–297 has biased composition (basic residues); it reads APRRPRERQGRQRARG. A compositionally biased stretch (gly residues) spans 298-309; it reads GRGGGNGNGNGG. The segment covering 310–324 has biased composition (low complexity); it reads NAAAPAAAPGDAPQE.

This sequence belongs to the Ap4A hydrolase family.

It carries out the reaction P(1),P(4)-bis(5'-adenosyl) tetraphosphate + H2O = 2 ADP + 2 H(+). Hydrolyzes diadenosine 5',5'''-P1,P4-tetraphosphate to yield ADP. This chain is Bis(5'-nucleosyl)-tetraphosphatase, symmetrical, found in Xanthomonas campestris pv. campestris (strain ATCC 33913 / DSM 3586 / NCPPB 528 / LMG 568 / P 25).